The chain runs to 686 residues: MAM domain-containing protein 2 (686 aa).

Residues 1-18 (MLLEGVLLVVQALQLASA) form the signal peptide. MAM domains lie at 24–169 (GSCA…YCIE), 168–329 (IECD…HCQN), 340–498 (TSCD…NCRS), and 507–666 (GECT…PCAG). N134 and N329 each carry an N-linked (GlcNAc...) asparagine glycan. N524 carries N-linked (GlcNAc...) asparagine glycosylation. Residues 665 to 686 (AGMEDTTEQSSGYSEDLNEIEY) are disordered.

In terms of processing, O-glycosylated; contains chondroitin sulfate.

Its subcellular location is the secreted. It is found in the extracellular space. The protein localises to the extracellular matrix. The polypeptide is MAM domain-containing protein 2 (Mamdc2) (Mus musculus (Mouse)).